We begin with the raw amino-acid sequence, 335 residues long: GTPase Obg (335 aa).

In terms of domain architecture, Obg spans 1 to 158; sequence MFVDQITLEL…RLVELELKLI (158 aa). The region spanning 159–334 is the OBG-type G domain; sequence ADIGLVGFPN…LHDLFKSKLS (176 aa). GTP contacts are provided by residues 165–172, 190–194, 215–218, 285–288, and 315–317; these read GFPNAGKS, FTTLH, DIPG, NKID, and SGL. 2 residues coordinate Mg(2+): serine 172 and threonine 192.

Belongs to the TRAFAC class OBG-HflX-like GTPase superfamily. OBG GTPase family. Monomer. Mg(2+) serves as cofactor.

It is found in the cytoplasm. Its function is as follows. An essential GTPase which binds GTP, GDP and possibly (p)ppGpp with moderate affinity, with high nucleotide exchange rates and a fairly low GTP hydrolysis rate. Plays a role in control of the cell cycle, stress response, ribosome biogenesis and in those bacteria that undergo differentiation, in morphogenesis control. This chain is GTPase Obg, found in Chlamydia muridarum (strain MoPn / Nigg).